The following is a 186-amino-acid chain: Protein SPMIP2 (186 aa).

The disordered stretch occupies residues 163–186; the sequence is SSLPRASKPPKLPKLPKKEKKRKH. The segment covering 176–186 has biased composition (basic residues); that stretch reads KLPKKEKKRKH.

The polypeptide is Protein SPMIP2 (Homo sapiens (Human)).